A 417-amino-acid polypeptide reads, in one-letter code: Dihydrolipoyllysine-residue succinyltransferase component of 2-oxoglutarate dehydrogenase complex (417 aa).

Residues 1 to 76 (MAEIKVPELA…QVGEIIGTIS (76 aa)) enclose the Lipoyl-binding domain. An N6-lipoyllysine modification is found at K42. Residues 75-191 (ISEGAGESSA…SFDKPVEVQK (117 aa)) form a disordered region. 2 stretches are compositionally biased toward basic and acidic residues: residues 89–103 (EKTE…EKQA) and 152–163 (RKQDVEAYEKPA). In terms of domain architecture, Peripheral subunit-binding (PSBD) spans 123-160 (IASPSARKLAREKGIDLSQVPTGDPLGRVRKQDVEAYE). Low complexity predominate over residues 164–182 (SKPAPQQKQQPQAQKAQQS). Residues H388 and D392 contribute to the active site.

The protein belongs to the 2-oxoacid dehydrogenase family. Forms a 24-polypeptide structural core with octahedral symmetry. Part of the 2-oxoglutarate dehydrogenase (OGDH) complex composed of E1 (2-oxoglutarate dehydrogenase), E2 (dihydrolipoamide succinyltransferase) and E3 (dihydrolipoamide dehydrogenase); the complex contains multiple copies of the three enzymatic components (E1, E2 and E3). (R)-lipoate serves as cofactor.

The enzyme catalyses N(6)-[(R)-dihydrolipoyl]-L-lysyl-[protein] + succinyl-CoA = N(6)-[(R)-S(8)-succinyldihydrolipoyl]-L-lysyl-[protein] + CoA. The protein operates within amino-acid degradation; L-lysine degradation via saccharopine pathway; glutaryl-CoA from L-lysine: step 6/6. E2 component of the 2-oxoglutarate dehydrogenase (OGDH) complex which catalyzes the second step in the conversion of 2-oxoglutarate to succinyl-CoA and CO(2). The chain is Dihydrolipoyllysine-residue succinyltransferase component of 2-oxoglutarate dehydrogenase complex (odhB) from Bacillus subtilis (strain 168).